The following is a 400-amino-acid chain: S-adenosylmethionine synthase (400 aa).

136–141 (GTGSTD) serves as a coordination point for ATP.

The protein belongs to the AdoMet synthase 2 family. The cofactor is Mg(2+).

The catalysed reaction is L-methionine + ATP + H2O = S-adenosyl-L-methionine + phosphate + diphosphate. It participates in amino-acid biosynthesis; S-adenosyl-L-methionine biosynthesis; S-adenosyl-L-methionine from L-methionine: step 1/1. Functionally, catalyzes the formation of S-adenosylmethionine from methionine and ATP. This chain is S-adenosylmethionine synthase, found in Methanoregula boonei (strain DSM 21154 / JCM 14090 / 6A8).